Consider the following 354-residue polypeptide: N-acetyl-gamma-glutamyl-phosphate reductase (354 aa).

Residue Cys156 is part of the active site.

It belongs to the NAGSA dehydrogenase family. Type 1 subfamily.

Its subcellular location is the cytoplasm. It catalyses the reaction N-acetyl-L-glutamate 5-semialdehyde + phosphate + NADP(+) = N-acetyl-L-glutamyl 5-phosphate + NADPH + H(+). Its pathway is amino-acid biosynthesis; L-arginine biosynthesis; N(2)-acetyl-L-ornithine from L-glutamate: step 3/4. Catalyzes the NADPH-dependent reduction of N-acetyl-5-glutamyl phosphate to yield N-acetyl-L-glutamate 5-semialdehyde. This is N-acetyl-gamma-glutamyl-phosphate reductase from Bordetella bronchiseptica (strain ATCC BAA-588 / NCTC 13252 / RB50) (Alcaligenes bronchisepticus).